The primary structure comprises 136 residues: Large ribosomal subunit protein uL22 (136 aa).

The protein belongs to the universal ribosomal protein uL22 family. Part of the 50S ribosomal subunit.

Its function is as follows. This protein binds specifically to 23S rRNA; its binding is stimulated by other ribosomal proteins, e.g. L4, L17, and L20. It is important during the early stages of 50S assembly. It makes multiple contacts with different domains of the 23S rRNA in the assembled 50S subunit and ribosome. The globular domain of the protein is located near the polypeptide exit tunnel on the outside of the subunit, while an extended beta-hairpin is found that lines the wall of the exit tunnel in the center of the 70S ribosome. The protein is Large ribosomal subunit protein uL22 of Parabacteroides distasonis (strain ATCC 8503 / DSM 20701 / CIP 104284 / JCM 5825 / NCTC 11152).